Consider the following 112-residue polypeptide: UPF0342 protein SPH_1504 (112 aa).

Belongs to the UPF0342 family.

This chain is UPF0342 protein SPH_1504, found in Streptococcus pneumoniae (strain Hungary19A-6).